We begin with the raw amino-acid sequence, 120 residues long: Small ribosomal subunit protein uS17 (120 aa).

The segment covering 1–22 (MMAEAKTGAKATKSAAAGAADG) has biased composition (low complexity). The segment at 1–46 (MMAEAKTGAKATKSAAAGAADGASKEKGPKHTPSPPKPSGRRKTRI) is disordered.

It belongs to the universal ribosomal protein uS17 family. In terms of assembly, part of the 30S ribosomal subunit.

Functionally, one of the primary rRNA binding proteins, it binds specifically to the 5'-end of 16S ribosomal RNA. The chain is Small ribosomal subunit protein uS17 from Mycobacterium ulcerans (strain Agy99).